The primary structure comprises 270 residues: Putative phosphoenolpyruvate synthase regulatory protein (270 aa).

150–157 (GVSRCGKT) contributes to the ADP binding site.

This sequence belongs to the pyruvate, phosphate/water dikinase regulatory protein family. PSRP subfamily.

The catalysed reaction is [pyruvate, water dikinase] + ADP = [pyruvate, water dikinase]-phosphate + AMP + H(+). It carries out the reaction [pyruvate, water dikinase]-phosphate + phosphate + H(+) = [pyruvate, water dikinase] + diphosphate. Its function is as follows. Bifunctional serine/threonine kinase and phosphorylase involved in the regulation of the phosphoenolpyruvate synthase (PEPS) by catalyzing its phosphorylation/dephosphorylation. In Shewanella amazonensis (strain ATCC BAA-1098 / SB2B), this protein is Putative phosphoenolpyruvate synthase regulatory protein.